The sequence spans 185 residues: Large ribosomal subunit protein bL25 (185 aa).

Belongs to the bacterial ribosomal protein bL25 family. CTC subfamily. In terms of assembly, part of the 50S ribosomal subunit; part of the 5S rRNA/L5/L18/L25 subcomplex. Contacts the 5S rRNA. Binds to the 5S rRNA independently of L5 and L18.

In terms of biological role, this is one of the proteins that binds to the 5S RNA in the ribosome where it forms part of the central protuberance. In Microcystis aeruginosa (strain NIES-843 / IAM M-2473), this protein is Large ribosomal subunit protein bL25.